The primary structure comprises 234 residues: Large ribosomal subunit protein uL1c (234 aa).

This sequence belongs to the universal ribosomal protein uL1 family. As to quaternary structure, part of the 50S ribosomal subunit.

It localises to the plastid. It is found in the chloroplast. Its function is as follows. Binds directly to 23S rRNA. Might be involved in E site tRNA release (Potential). In Rhodomonas salina (Cryptomonas salina), this protein is Large ribosomal subunit protein uL1c (rpl1).